The chain runs to 391 residues: Probable tRNA sulfurtransferase (391 aa).

Residues 60–167 (DEIIDHIKKV…KDNCYVYTDR (108 aa)) enclose the THUMP domain. Residues 185 to 186 (LL), 210 to 211 (HF), R267, G289, and Q298 each bind ATP.

The protein belongs to the ThiI family.

The protein localises to the cytoplasm. The catalysed reaction is [ThiI sulfur-carrier protein]-S-sulfanyl-L-cysteine + a uridine in tRNA + 2 reduced [2Fe-2S]-[ferredoxin] + ATP + H(+) = [ThiI sulfur-carrier protein]-L-cysteine + a 4-thiouridine in tRNA + 2 oxidized [2Fe-2S]-[ferredoxin] + AMP + diphosphate. The enzyme catalyses [ThiS sulfur-carrier protein]-C-terminal Gly-Gly-AMP + S-sulfanyl-L-cysteinyl-[cysteine desulfurase] + AH2 = [ThiS sulfur-carrier protein]-C-terminal-Gly-aminoethanethioate + L-cysteinyl-[cysteine desulfurase] + A + AMP + 2 H(+). It functions in the pathway cofactor biosynthesis; thiamine diphosphate biosynthesis. Catalyzes the ATP-dependent transfer of a sulfur to tRNA to produce 4-thiouridine in position 8 of tRNAs, which functions as a near-UV photosensor. Also catalyzes the transfer of sulfur to the sulfur carrier protein ThiS, forming ThiS-thiocarboxylate. This is a step in the synthesis of thiazole, in the thiamine biosynthesis pathway. The sulfur is donated as persulfide by IscS. The chain is Probable tRNA sulfurtransferase from Finegoldia magna (strain ATCC 29328 / DSM 20472 / WAL 2508) (Peptostreptococcus magnus).